Here is a 76-residue protein sequence, read N- to C-terminus: Protein UvsW.1 (76 aa).

Probably interacts with UvsW.

Functionally, inhibits the single-stranded annealing activity of UvsW, has no effect on UvsW helicase activity. This Escherichia coli (Bacteriophage T4) protein is Protein UvsW.1.